We begin with the raw amino-acid sequence, 265 residues long: Phosphatidylserine decarboxylase proenzyme (265 aa).

Residues D86, H142, and S226 each act as charge relay system; for autoendoproteolytic cleavage activity in the active site. S226 serves as the catalytic Schiff-base intermediate with substrate; via pyruvic acid; for decarboxylase activity. S226 is modified (pyruvic acid (Ser); by autocatalysis).

The protein belongs to the phosphatidylserine decarboxylase family. PSD-B subfamily. Prokaryotic type I sub-subfamily. As to quaternary structure, heterodimer of a large membrane-associated beta subunit and a small pyruvoyl-containing alpha subunit. Requires pyruvate as cofactor. Post-translationally, is synthesized initially as an inactive proenzyme. Formation of the active enzyme involves a self-maturation process in which the active site pyruvoyl group is generated from an internal serine residue via an autocatalytic post-translational modification. Two non-identical subunits are generated from the proenzyme in this reaction, and the pyruvate is formed at the N-terminus of the alpha chain, which is derived from the carboxyl end of the proenzyme. The autoendoproteolytic cleavage occurs by a canonical serine protease mechanism, in which the side chain hydroxyl group of the serine supplies its oxygen atom to form the C-terminus of the beta chain, while the remainder of the serine residue undergoes an oxidative deamination to produce ammonia and the pyruvoyl prosthetic group on the alpha chain. During this reaction, the Ser that is part of the protease active site of the proenzyme becomes the pyruvoyl prosthetic group, which constitutes an essential element of the active site of the mature decarboxylase.

Its subcellular location is the cell membrane. The enzyme catalyses a 1,2-diacyl-sn-glycero-3-phospho-L-serine + H(+) = a 1,2-diacyl-sn-glycero-3-phosphoethanolamine + CO2. It participates in phospholipid metabolism; phosphatidylethanolamine biosynthesis; phosphatidylethanolamine from CDP-diacylglycerol: step 2/2. Functionally, catalyzes the formation of phosphatidylethanolamine (PtdEtn) from phosphatidylserine (PtdSer). This is Phosphatidylserine decarboxylase proenzyme from Anoxybacillus flavithermus (strain DSM 21510 / WK1).